The following is a 633-amino-acid chain: MHGLLLAGLLALPMNVLAHPAEQQTSSVLSRRGVDIDSFRLPLKAKYMDSDATAQKIQALSFSKEDDYVSTATKLVKSTFPKSTFRVVDDHYIGTNGIGHVHFKQTAHGLDIDNSDFNVNIDRDGKVFSFGNSFFTGEIPKESPMVKREFSDPVKALKGAVKALNLPVKSENAKAKTVEGKESFEFQGTSGALSAPKAKLVYLQKEDGSLALTWKVETDVGDNWLLSYVDAHDSETVHNVVDYVASAEFKVFAWGLNDPTEGNPTSFRDPWTASSPFTWHSDGTNKYPTTRGNNAIAQDNPTGGSTYLNNYRPQSANLIFNYPWTAAMTPPSSYKDFSITQLFYTTNRYHDLLYSFGFNEAAGNFQVNNNNKGGKGNDFAIVNAQDGSGTNNANFATPPDGSPGRMRMYNWTTARPNRDGCLEAGIVIHEYTHGLSNRLCGGPANSACLNALESGGMGEGWGDFYATAIRLKPRDTKNTNYSMGAWAANDPKGIRAYLYSTNLQTNPYMYTSVNNLREVHGIGTVWATMLYELMWGLIEAHGGTYSADPVFRNGVPQDGRHLAMKIVMDGMALQPCNPNFVQARDAIIDADRALTNGANKCTIWKAFAKRGLGYGAKYDPRTRTGSNQLPPGC.

Positions M1–A18 are cleaved as a signal peptide. A propeptide spanning residues H19–S246 is cleaved from the precursor. Residue N410 is glycosylated (N-linked (GlcNAc...) asparagine). H429 serves as a coordination point for Zn(2+). The active site involves E430. H433 is a Zn(2+) binding site. N-linked (GlcNAc...) asparagine glycosylation occurs at N480.

It belongs to the peptidase M36 family. Zn(2+) serves as cofactor.

It is found in the secreted. Its function is as follows. Secreted metalloproteinase probably acting as a virulence factor. The protein is Extracellular metalloproteinase 3 (MEP3) of Arthroderma otae (Microsporum canis).